Here is a 58-residue protein sequence, read N- to C-terminus: APVNEDCLLPKKVGPCRAAVPRFYYNSDSGKCEGFTYGGCHANANNFKTKDECKNACH.

The region spanning 7–57 (CLLPKKVGPCRAAVPRFYYNSDSGKCEGFTYGGCHANANNFKTKDECKNAC) is the BPTI/Kunitz inhibitor domain. Intrachain disulfides connect Cys-7–Cys-57, Cys-16–Cys-40, and Cys-32–Cys-53.

This sequence belongs to the venom Kunitz-type family. Sea anemone type 2 potassium channel toxin subfamily. Expressed by acrorhagi.

The protein localises to the secreted. It localises to the nematocyst. Its function is as follows. Serine protease inhibitor that is strongly active against trypsin (1900 IU/mg) and moderately active against plasmin. Also shows weak inhibition against chymotrypsin (70%), elastase (38%) and the metalloprotease thermolysin (14%). This is PI-actitoxin-Axm2a from Anthopleura aff. xanthogrammica (Sea anemone).